Reading from the N-terminus, the 294-residue chain is 4-diphosphocytidyl-2-C-methyl-D-erythritol kinase (294 aa).

K11 is a catalytic residue. 96–106 contributes to the ATP binding site; sequence PVAAGIGGGSA. D138 is a catalytic residue.

The protein belongs to the GHMP kinase family. IspE subfamily.

It carries out the reaction 4-CDP-2-C-methyl-D-erythritol + ATP = 4-CDP-2-C-methyl-D-erythritol 2-phosphate + ADP + H(+). Its pathway is isoprenoid biosynthesis; isopentenyl diphosphate biosynthesis via DXP pathway; isopentenyl diphosphate from 1-deoxy-D-xylulose 5-phosphate: step 3/6. Catalyzes the phosphorylation of the position 2 hydroxy group of 4-diphosphocytidyl-2C-methyl-D-erythritol. The sequence is that of 4-diphosphocytidyl-2-C-methyl-D-erythritol kinase from Rhodopseudomonas palustris (strain BisB5).